The chain runs to 85 residues: Alpha-mammal toxin AaH2 (85 aa).

Residues 1–19 (MNYLVMISLALLFVTGVES) form the signal peptide. Positions 21–83 (KDGYIVDDVN…VRTKGPGRCH (63 aa)) constitute an LCN-type CS-alpha/beta domain. Intrachain disulfides connect Cys-31–Cys-82, Cys-35–Cys-55, Cys-41–Cys-65, and Cys-45–Cys-67. Position 83 is a histidine amide (His-83).

The protein belongs to the long (4 C-C) scorpion toxin superfamily. Sodium channel inhibitor family. Alpha subfamily. Post-translationally, the amidation of His-83 is not necessary for toxicity. In terms of tissue distribution, expressed by the venom gland.

The protein resides in the secreted. Its function is as follows. Alpha toxin that binds voltage-independently at site-3 of sodium channels (Nav), inhibits the inactivation of the activated channels, and weakly inhibits activation, thereby blocking neuronal transmission. Inserts into voltage-sensing domain IV to stabilize a deactivated state, thereby preventing fast-inactivation. Principally slows the inactivation process of TTX-sensitive sodium channels. It is active on mammalian brain Nav1.2/SCN2A (EC(50)human=0.72 nM, EC(50)rat=2.6 nM), on rat skeletal muscle Nav1.4/SCN4A (EC(50)=2.2 nM), and on human neuronal Nav1.7/SCN9A (EC(50)=6.8-51.7 nM). In vivo, intraplantar injection into mice induces spontaneous pain responses. In Androctonus australis (Sahara scorpion), this protein is Alpha-mammal toxin AaH2.